A 274-amino-acid polypeptide reads, in one-letter code: Dermonecrotic toxin SdSicTox-betaIIB1bx (274 aa).

His-5 is a catalytic residue. The Mg(2+) site is built by Glu-25 and Asp-27. The Nucleophile role is filled by His-41. Cystine bridges form between Cys-45-Cys-51 and Cys-47-Cys-190. Residue Asp-85 coordinates Mg(2+).

Belongs to the arthropod phospholipase D family. Class II subfamily. It depends on Mg(2+) as a cofactor. In terms of tissue distribution, expressed by the venom gland.

The protein localises to the secreted. The enzyme catalyses an N-(acyl)-sphingosylphosphocholine = an N-(acyl)-sphingosyl-1,3-cyclic phosphate + choline. The catalysed reaction is an N-(acyl)-sphingosylphosphoethanolamine = an N-(acyl)-sphingosyl-1,3-cyclic phosphate + ethanolamine. It catalyses the reaction a 1-acyl-sn-glycero-3-phosphocholine = a 1-acyl-sn-glycero-2,3-cyclic phosphate + choline. It carries out the reaction a 1-acyl-sn-glycero-3-phosphoethanolamine = a 1-acyl-sn-glycero-2,3-cyclic phosphate + ethanolamine. Its function is as follows. Dermonecrotic toxins cleave the phosphodiester linkage between the phosphate and headgroup of certain phospholipids (sphingolipid and lysolipid substrates), forming an alcohol (often choline) and a cyclic phosphate. This toxin acts on sphingomyelin (SM). It may also act on ceramide phosphoethanolamine (CPE), lysophosphatidylcholine (LPC) and lysophosphatidylethanolamine (LPE), but not on lysophosphatidylserine (LPS), and lysophosphatidylglycerol (LPG). It acts by transphosphatidylation, releasing exclusively cyclic phosphate products as second products. Induces dermonecrosis, hemolysis, increased vascular permeability, edema, inflammatory response, and platelet aggregation. The chain is Dermonecrotic toxin SdSicTox-betaIIB1bx from Sicarius cf. damarensis (strain GJB-2008) (Six-eyed sand spider).